The following is a 1146-amino-acid chain: Error-prone DNA polymerase (1146 aa).

Disordered stretches follow at residues 1-43 (MGWG…WSRK) and 154-178 (ATPE…PPGP). Residues 12–26 (ELERVLSGRPGRTDP) are compositionally biased toward basic and acidic residues.

The protein belongs to the DNA polymerase type-C family. DnaE2 subfamily.

It is found in the cytoplasm. It carries out the reaction DNA(n) + a 2'-deoxyribonucleoside 5'-triphosphate = DNA(n+1) + diphosphate. Functionally, DNA polymerase involved in damage-induced mutagenesis and translesion synthesis (TLS). It is not the major replicative DNA polymerase. The sequence is that of Error-prone DNA polymerase from Nocardia farcinica (strain IFM 10152).